We begin with the raw amino-acid sequence, 112 residues long: ATP synthase epsilon chain (112 aa).

It belongs to the ATPase epsilon chain family. In terms of assembly, F-type ATPases have 2 components, CF(1) - the catalytic core - and CF(0) - the membrane proton channel. CF(1) has five subunits: alpha(3), beta(3), gamma(1), delta(1), epsilon(1). CF(0) has three main subunits: a, b and c.

It is found in the cell inner membrane. Its function is as follows. Produces ATP from ADP in the presence of a proton gradient across the membrane. This is ATP synthase epsilon chain (atpC) from Rickettsia prowazekii (strain Madrid E).